The following is a 681-amino-acid chain: Probable glutamate carboxypeptidase LAMP1 (681 aa).

The Cytoplasmic segment spans residues Met-1 to Ser-6. Residues Leu-7–Ser-24 form a helical; Signal-anchor for type II membrane protein membrane-spanning segment. Residues Pro-25–Ile-681 are Extracellular-facing. 4 N-linked (GlcNAc...) asparagine glycosylation sites follow: Asn-42, Asn-140, Asn-166, and Asn-299. A catalytic region spans residues Ser-241 to Leu-527. The Zn(2+) site is built by His-333 and Asp-343. The active-site Nucleophile is the Glu-380. Glu-381 and Asp-409 together coordinate Zn(2+). N-linked (GlcNAc...) asparagine glycosylation occurs at Asn-441. His-493 lines the Zn(2+) pocket. A glycan (N-linked (GlcNAc...) asparagine) is linked at Asn-536.

The protein belongs to the peptidase M28 family. M28B subfamily. The cofactor is Zn(2+).

The protein resides in the endoplasmic reticulum membrane. It catalyses the reaction Release of an unsubstituted, C-terminal glutamyl residue, typically from Ac-Asp-Glu or folylpoly-gamma-glutamates.. In terms of biological role, acts in association with AMP1 to suppress ectopic stem cell niche formation in the shoot apical meristem (SAM) independently of cytokinin signaling pathway. The chain is Probable glutamate carboxypeptidase LAMP1 from Arabidopsis thaliana (Mouse-ear cress).